Consider the following 224-residue polypeptide: Pre-hexon-linking protein VIII (224 aa).

Threonine 64 is subject to Phosphothreonine; by host. A propeptide spanning residues arginine 112–glycine 154 is cleaved from the precursor.

The protein belongs to the adenoviridae hexon-linking protein family. Interacts with the peripentonal hexons as well as the hexons in the facets. Part of a complex composed of the core-capsid bridging protein, the endosome lysis protein VI and the hexon-linking protein VIII; these interactions bridge the virus core to the capsid. Cleaved by the viral protease during virion maturation. May cause the middle segment to be shed from the capsid.

It localises to the virion. It is found in the host nucleus. In terms of biological role, structural component of the virion that acts as a cement protein on the capsid interior and which glue the peripentonal hexons and group-of-nine hexons together. The polypeptide is Pre-hexon-linking protein VIII (Canis lupus familiaris (Dog)).